Reading from the N-terminus, the 1393-residue chain is DNA glycosylase/AP lyase ROS1 (1393 aa).

Disordered stretches follow at residues 1-25 (MEKQRREESSFQQPPWIPQTPMKPF), 98-186 (SLSS…TSTR), and 237-265 (LSAPSTPKRKRSQGKRKGVQPKKNGSNLE). The segment covering 98 to 108 (SLSSVSNNVAE) has biased composition (low complexity). Residues 117–126 (PKRKKHRPKV) show a composition bias toward basic residues. 2 stretches are compositionally biased toward basic and acidic residues: residues 127–138 (RREAKPKREPKP) and 162–171 (KKVEVSKDQD). Residues 243–256 (PKRKRSQGKRKGVQ) show a composition bias toward basic residues. The segment at 528 to 626 (KVDLDDETDR…AFMSLASQFP (99 aa)) is DEMETER. Positions 653–672 (EETMSSPPDHNHSSVTLKNT) are enriched in polar residues. 2 disordered regions span residues 653–722 (EETM…SVEV) and 789–830 (SNQV…CSQQ). The segment covering 687–698 (SRSSSEIAISAH) has biased composition (low complexity). A compositionally biased stretch (basic and acidic residues) spans 699–722 (ESVDKTTDSKEYVDSDRKGSSVEV). The segment covering 816-830 (KSSVDSSEPGCCSQQ) has biased composition (polar residues). Residue lysine 901 forms a Glycyl lysine isopeptide (Lys-Gly) (interchain with G-Cter in ubiquitin) linkage. The [4Fe-4S] cluster site is built by cysteine 1038, cysteine 1045, cysteine 1048, and cysteine 1054.

The protein belongs to the DNA glycosylase family. DEMETER subfamily. As to quaternary structure, interacts (via the central region) with ZDP. Binds to RPA2A. Interacts with XRCC1. Interacts probably with a complex made of MBD7, IDM1, IDM2 and IDM3. Interacts with APE1L. The cofactor is [4Fe-4S] cluster. Expressed ubiquitously in both vegetative and reproductive organs.

The protein localises to the nucleus. Its subcellular location is the nucleolus. It catalyses the reaction 2'-deoxyribonucleotide-(2'-deoxyribose 5'-phosphate)-2'-deoxyribonucleotide-DNA = a 3'-end 2'-deoxyribonucleotide-(2,3-dehydro-2,3-deoxyribose 5'-phosphate)-DNA + a 5'-end 5'-phospho-2'-deoxyribonucleoside-DNA + H(+). Its activity is regulated as follows. Stimulated by ZDP. Stimulated by XRCC1. In terms of biological role, bifunctional DNA glycosylase/lyase, which excises 5-methylcytosine (5-meC) and 5-hydroxymethylcytosine (5-hmeC), leaving an apyrimidinic (AP) site that is subsequently incised by the lyase activity. Generates 3'-phosphor-alpha,beta-unsaturated aldehyde (3'-PUA) as a primary 5-meC excision intermediate. Prevents DNA hypermethylation, specifically in the promoter of otherwise silenced loci. May be involved in DNA repair through its nicking activity on methylated DNA. Binds with similar affinity to both methylated and non-methylated DNA. Highly distributive behavior on DNA substrates containing multiple 5-meC residues. Involved with Pol IV in the remodeling of the 5S rDNA chromatin via DNA methylation modifications during the first days of development post-germination. Participates in UV-B induced- and oxidative DNA damage repair. This is DNA glycosylase/AP lyase ROS1 from Arabidopsis thaliana (Mouse-ear cress).